The following is a 440-amino-acid chain: Xylose isomerase (440 aa).

Catalysis depends on residues His-100 and Asp-103. 7 residues coordinate Mg(2+): Glu-231, Glu-267, His-270, Asp-295, Asp-306, Asp-308, and Asp-338.

Belongs to the xylose isomerase family. In terms of assembly, homotetramer. The cofactor is Mg(2+).

The protein localises to the cytoplasm. It carries out the reaction alpha-D-xylose = alpha-D-xylulofuranose. The protein is Xylose isomerase of Burkholderia orbicola (strain MC0-3).